The sequence spans 368 residues: N-acetylneuraminate epimerase 2 (368 aa).

Residues 1-19 (MNKTITALAILMASFAANA) form the signal peptide. 7 Kelch repeats span residues 40-84 (TVYI…AFID), 86-137 (NLYV…FVHN), 139-173 (KAYV…KINA), 174-219 (YYFD…VNKG), 222-265 (TWLI…VAGG), 287-336 (ENYQ…LWNN), and 338-367 (LLII…VTVQ). Glu228 functions as the Proton acceptor in the catalytic mechanism.

This sequence belongs to the NanM family. As to quaternary structure, homodimer.

It localises to the periplasm. The catalysed reaction is N-acetyl-alpha-neuraminate = N-acetyl-beta-neuraminate. Functionally, converts alpha-N-acetylneuranimic acid (Neu5Ac) to the beta-anomer, accelerating the equilibrium between the alpha- and beta-anomers. Probably facilitates sialidase-negative bacteria to compete successfully for limited amounts of extracellular Neu5Ac, which is likely taken up in the beta-anomer. In addition, the rapid removal of sialic acid from solution might be advantageous to the bacterium to damp down host responses. The protein is N-acetylneuraminate epimerase 2 of Escherichia coli O6:H1 (strain CFT073 / ATCC 700928 / UPEC).